Reading from the N-terminus, the 338-residue chain is Probable tRNA pseudouridine synthase B (338 aa).

Aspartate 82 serves as the catalytic Nucleophile. Residues 250–325 (LPKVWIRDSA…IAVDVDKVFM (76 aa)) enclose the PUA domain.

This sequence belongs to the pseudouridine synthase TruB family. Type 2 subfamily.

The enzyme catalyses uridine(55) in tRNA = pseudouridine(55) in tRNA. In terms of biological role, could be responsible for synthesis of pseudouridine from uracil-55 in the psi GC loop of transfer RNAs. The protein is Probable tRNA pseudouridine synthase B of Thermococcus kodakarensis (strain ATCC BAA-918 / JCM 12380 / KOD1) (Pyrococcus kodakaraensis (strain KOD1)).